The sequence spans 34 residues: Photosystem II reaction center protein M (34 aa).

The helical transmembrane segment at isoleucine 5–isoleucine 25 threads the bilayer.

It belongs to the PsbM family. As to quaternary structure, PSII is composed of 1 copy each of membrane proteins PsbA, PsbB, PsbC, PsbD, PsbE, PsbF, PsbH, PsbI, PsbJ, PsbK, PsbL, PsbM, PsbT, PsbX, PsbY, PsbZ, Psb30/Ycf12, at least 3 peripheral proteins of the oxygen-evolving complex and a large number of cofactors. It forms dimeric complexes. Detected in both etioplasts and green leaves; PSII is only assembled in green leaves.

It localises to the plastid. Its subcellular location is the chloroplast thylakoid membrane. In terms of biological role, one of the components of the core complex of photosystem II (PSII). PSII is a light-driven water:plastoquinone oxidoreductase that uses light energy to abstract electrons from H(2)O, generating O(2) and a proton gradient subsequently used for ATP formation. It consists of a core antenna complex that captures photons, and an electron transfer chain that converts photonic excitation into a charge separation. This subunit is found at the monomer-monomer interface. The sequence is that of Photosystem II reaction center protein M from Hordeum vulgare (Barley).